The following is a 248-amino-acid chain: tRNA (guanine-N(1)-)-methyltransferase (248 aa).

S-adenosyl-L-methionine contacts are provided by residues glycine 113 and 133 to 138 (VGDYVL).

This sequence belongs to the RNA methyltransferase TrmD family. As to quaternary structure, homodimer.

It is found in the cytoplasm. It carries out the reaction guanosine(37) in tRNA + S-adenosyl-L-methionine = N(1)-methylguanosine(37) in tRNA + S-adenosyl-L-homocysteine + H(+). Functionally, specifically methylates guanosine-37 in various tRNAs. The polypeptide is tRNA (guanine-N(1)-)-methyltransferase (Shewanella oneidensis (strain ATCC 700550 / JCM 31522 / CIP 106686 / LMG 19005 / NCIMB 14063 / MR-1)).